Consider the following 361-residue polypeptide: tRNA-specific 2-thiouridylase MnmA (361 aa).

Residues 6-13 and Ile32 contribute to the ATP site; that span reads LVSGGVDS. The tract at residues 93–95 is interaction with target base in tRNA; sequence NPD. The active-site Nucleophile is Cys98. An intrachain disulfide couples Cys98 to Cys193. An ATP-binding site is contributed by Gly121. Residues 143-145 are interaction with tRNA; that stretch reads KDQ. Cys193 functions as the Cysteine persulfide intermediate in the catalytic mechanism.

Belongs to the MnmA/TRMU family.

It is found in the cytoplasm. The enzyme catalyses S-sulfanyl-L-cysteinyl-[protein] + uridine(34) in tRNA + AH2 + ATP = 2-thiouridine(34) in tRNA + L-cysteinyl-[protein] + A + AMP + diphosphate + H(+). Its function is as follows. Catalyzes the 2-thiolation of uridine at the wobble position (U34) of tRNA, leading to the formation of s(2)U34. The sequence is that of tRNA-specific 2-thiouridylase MnmA from Porphyromonas gingivalis (strain ATCC 33277 / DSM 20709 / CIP 103683 / JCM 12257 / NCTC 11834 / 2561).